The sequence spans 861 residues: MSDARIVAVGVEEEFHILDLTTRQLVPRAEEVLRRLDGDSFSPELLKSVVETNSQPTADLLELRTNLLDLRRRLAEVTGELGLGPAAAGTVPIVDMDLLDVSRDDRYEQMTEDYQIVAREQLICGAQVHVDVADRDLAMAVVAWTAPWLPMLLALSASSPFWMGADSGYASMRTLVWQRWPTAGVAGSFRTAAEYDQLVADLIKSGVISDPGMVYFDVRPSAHLPTVELRICDACPDVDNVILIAGLFRALVCQAIEEIEAGGQAPPPRAELLRAATWRAARSGLEGDLVDILGAGPIPAQAMLRRLLTEVRPQLERFDDWELIDNLAEQAVGRGSSAHRQRRAFARRGLLTDVADLVLAETRDVPPAGAAAALGSAPAVSASDQIAPRLLERYQPTGYDEIVDARGAVRPQYRAVMRTLERLGPGILDERVGTREAEQNDRGIVFRASGDSASRPFPFDLVPRIIAADDWTTLTTGLSQRVRALEAFLHDIYGERAAVADGIVPAWVVNDAPSLRHGGRAVGPDAIRVTVAGIDLVRGGDGGWLVLEDNLRVPSGIAYAMEGRRLAESVLPELGPPAGILRLDGIPALLHEALVAAAPAAATGDPAVAVLTGGKTDAAYFEHSLLAEKMGVALVEPADLLVDDNDVVYRIDGSRRCRVDVLYRRMDEDDLFGALGAAGTPLGLPLLRAIRARRVGIANALGNGVGDDKVVYAYVPRMVTYYLGEQPVLDDVPTYVCGDPEQCEHVLDNLDQLVVKPVDGYGGSGVVIGPHAEPYRLTEVRERILANPRQWIGQELVSLSTHPTWHDSHLEPCAVDLRVFVYAGREPRVVPAALSRVAPPGSLIVNSSQGGGSKDTWIPRR.

Residues 1 to 372 (MSDARIVAVG…RDVPPAGAAA (372 aa)) form a carboxylate-amine ligase region. The unknown stretch occupies residues 373–861 (ALGSAPAVSA…GSKDTWIPRR (489 aa)).

This sequence in the N-terminal section; belongs to the glutamate--cysteine ligase type 2 family. YbdK subfamily.

The catalysed reaction is L-cysteine + L-glutamate + ATP = gamma-L-glutamyl-L-cysteine + ADP + phosphate + H(+). Its function is as follows. ATP-dependent carboxylate-amine ligase which exhibits weak glutamate--cysteine ligase activity. The chain is Putative glutamate--cysteine ligase 2-2 from Frankia casuarinae (strain DSM 45818 / CECT 9043 / HFP020203 / CcI3).